A 450-amino-acid chain; its full sequence is C4-dicarboxylate transport protein (450 aa).

The next 9 helical transmembrane spans lie at 10 to 30 (SLYF…HFYP), 46 to 66 (LIKM…IAGM), 78 to 98 (YALL…LIVV), 143 to 163 (IVGA…VIFG), 190 to 210 (IINM…AFTI), 224 to 244 (LMIC…GAIA), 291 to 311 (VVGL…SIYL), 332 to 352 (ITLL…TGSG), and 354 to 374 (IVLA…LALI). A disordered region spans residues 428-450 (PEDDLGVAEGPTPGAAVNTTKTV).

Belongs to the dicarboxylate/amino acid:cation symporter (DAACS) (TC 2.A.23) family.

The protein resides in the cell inner membrane. Its function is as follows. Responsible for the transport of dicarboxylates such as succinate, fumarate, and malate from the periplasm across the membrane. In Pseudomonas syringae pv. syringae (strain B728a), this protein is C4-dicarboxylate transport protein.